A 358-amino-acid chain; its full sequence is tRNA pseudouridine synthase D (358 aa).

Aspartate 84 (nucleophile) is an active-site residue. The 152-residue stretch at 161–312 (GTPNYFGPQR…RRSLRLMVAD (152 aa)) folds into the TRUD domain.

This sequence belongs to the pseudouridine synthase TruD family.

The enzyme catalyses uridine(13) in tRNA = pseudouridine(13) in tRNA. Functionally, responsible for synthesis of pseudouridine from uracil-13 in transfer RNAs. The polypeptide is tRNA pseudouridine synthase D (Nitrosococcus oceani (strain ATCC 19707 / BCRC 17464 / JCM 30415 / NCIMB 11848 / C-107)).